A 247-amino-acid chain; its full sequence is tRNA pseudouridine synthase A (247 aa).

Catalysis depends on Asp58, which acts as the Nucleophile. Residue Tyr116 coordinates substrate.

It belongs to the tRNA pseudouridine synthase TruA family. In terms of assembly, homodimer.

The enzyme catalyses uridine(38/39/40) in tRNA = pseudouridine(38/39/40) in tRNA. Its function is as follows. Formation of pseudouridine at positions 38, 39 and 40 in the anticodon stem and loop of transfer RNAs. In Hydrogenobaculum sp. (strain Y04AAS1), this protein is tRNA pseudouridine synthase A.